Here is a 144-residue protein sequence, read N- to C-terminus: Large ribosomal subunit protein uL15 (144 aa).

Residues 1 to 48 are disordered; that stretch reads MQLNNLKPAAGSKHAKRRVGRGIGSGLGKTAGRGHKGQKSRSGGFHKV. Gly residues predominate over residues 21–31; that stretch reads RGIGSGLGKTA.

Belongs to the universal ribosomal protein uL15 family. In terms of assembly, part of the 50S ribosomal subunit.

Functionally, binds to the 23S rRNA. The polypeptide is Large ribosomal subunit protein uL15 (Cupriavidus taiwanensis (strain DSM 17343 / BCRC 17206 / CCUG 44338 / CIP 107171 / LMG 19424 / R1) (Ralstonia taiwanensis (strain LMG 19424))).